An 880-amino-acid chain; its full sequence is Valine--tRNA ligase (880 aa).

Residues 49–59 (PNVTGKLHLGH) carry the 'HIGH' region motif. Residues 525 to 529 (KMSKS) carry the 'KMSKS' region motif. Position 528 (Lys-528) interacts with ATP. The stretch at 809–879 (LAGLLDLEEE…AVRARIKELK (71 aa)) forms a coiled coil.

Belongs to the class-I aminoacyl-tRNA synthetase family. ValS type 1 subfamily. As to quaternary structure, monomer.

Its subcellular location is the cytoplasm. The catalysed reaction is tRNA(Val) + L-valine + ATP = L-valyl-tRNA(Val) + AMP + diphosphate. Functionally, catalyzes the attachment of valine to tRNA(Val). As ValRS can inadvertently accommodate and process structurally similar amino acids such as threonine, to avoid such errors, it has a 'posttransfer' editing activity that hydrolyzes mischarged Thr-tRNA(Val) in a tRNA-dependent manner. This Halalkalibacterium halodurans (strain ATCC BAA-125 / DSM 18197 / FERM 7344 / JCM 9153 / C-125) (Bacillus halodurans) protein is Valine--tRNA ligase.